The chain runs to 152 residues: Deoxyuridine 5'-triphosphate nucleotidohydrolase (152 aa).

Residues 71-73 (RSG), N84, 88-90 (LID), and M98 contribute to the substrate site.

It belongs to the dUTPase family. Requires Mg(2+) as cofactor.

The enzyme catalyses dUTP + H2O = dUMP + diphosphate + H(+). It functions in the pathway pyrimidine metabolism; dUMP biosynthesis; dUMP from dCTP (dUTP route): step 2/2. Functionally, this enzyme is involved in nucleotide metabolism: it produces dUMP, the immediate precursor of thymidine nucleotides and it decreases the intracellular concentration of dUTP so that uracil cannot be incorporated into DNA. The protein is Deoxyuridine 5'-triphosphate nucleotidohydrolase of Enterobacter sp. (strain 638).